A 206-amino-acid chain; its full sequence is MAGPGTAAAALLPAVLLAVLAPWAGRGGAAPTAPNGTLEAELERRWESLVARSLLAGLPVAAQPKEAAVQSGAGDYLLGIKRLRRLYCNVGIGFHLQVLPDGRIGGVHADTSDSLLELSPVERGVVSIFGVASRFFVAMSSRGRLYGSPFFTDECRFREILLPNNYNAYECDRHPGMFIALSKNGKAKKGNRVSPTMKVTHFLPRL.

The signal sequence occupies residues 1 to 29 (MAGPGTAAAALLPAVLLAVLAPWAGRGGA).

This sequence belongs to the heparin-binding growth factors family. In terms of assembly, interacts with FGFR1, FGFR2, FGFR3 and FGFR4. Affinity between fibroblast growth factors (FGFs) and their receptors is increased by heparan sulfate glycosaminoglycans that function as coreceptors.

It localises to the secreted. Functionally, plays an important role in the regulation of embryonic development, cell proliferation, and cell differentiation. Required for normal limb and cardiac valve development during embryogenesis. May play a role in embryonic molar tooth bud development via inducing the expression of MSX1, MSX2 and MSX1-mediated expression of SDC1 in dental mesenchyme cells. In Bos taurus (Bovine), this protein is Fibroblast growth factor 4.